We begin with the raw amino-acid sequence, 2144 residues long: Reducing polyketide synthase PKS2 (2144 aa).

Residues 10 to 436 (PMPLAIIGMS…GSNSHCIVRA (427 aa)) enclose the Ketosynthase family 3 (KS3) domain. Active-site for beta-ketoacyl synthase activity residues include Cys-183, His-319, and His-360. The interval 538–855 (VFAFTGQGAQ…VPSLHRGQNA (318 aa)) is malonyl-CoA:ACP transacylase (MAT). Residues 924–1058 (HDLLGSINSS…ALVKCEATTD (135 aa)) form an N-terminal hotdog fold region. The interval 924-1214 (HDLLGSINSS…RSYSIDGTTD (291 aa)) is dehydratase (DH) domain. One can recognise a PKS/mFAS DH domain in the interval 924–1237 (HDLLGSINSS…LAVEATLAPQ (314 aa)). The tract at residues 1076 to 1237 (HSCVGSPLLY…LAVEATLAPQ (162 aa)) is C-terminal hotdog fold. Positions 1461 to 1747 (GMPDSLYLQR…SETDSKKLLL (287 aa)) are enoyl reductase (ER) domain. The interval 1771–1948 (AVYLLVGGSG…PATSLALTAV (178 aa)) is ketoreductase (KR) domain. One can recognise a Carrier domain in the interval 2059-2136 (EATQLLLAAI…KIVDSVIVKR (78 aa)). Position 2096 is an O-(pantetheine 4'-phosphoryl)serine (Ser-2096).

It participates in mycotoxin biosynthesis. In terms of biological role, reducing polyketide synthase (PKS); part of the Tox1A locus, one of the 2 loci that mediate the biosynthesis of T-toxin, a family of linear polyketides 37 to 45 carbons in length, of which the major component is 41 carbons, and which leads to high virulence to maize. One of the PKSs (PKS1 or PKS2) could synthesize a precursor, used subsequently by the other PKS as starter unit, to add additional carbons. Variability in the length of the final carbon backbone C35-47 could be achieved by varying the number of condensation cycles, or use of different starter or extender units or might be due to decarboxylation of the penultimate product, catalyzed by DEC1. Additional proteins are required for the biosynthesis of T-toxin, including oxidoreductases RED1, RED2, RED3, LAM1 and OXI1, as well as esterase TOX9. This chain is Reducing polyketide synthase PKS2, found in Cochliobolus heterostrophus (strain C4 / ATCC 48331 / race T) (Southern corn leaf blight fungus).